The sequence spans 302 residues: Acetylxylan esterase (302 aa).

The N-terminal stretch at Met-1–Gly-20 is a signal peptide. Positions Ser-21–Arg-31 are excised as a propeptide. Gln-32 carries the post-translational modification Pyrrolidone carboxylic acid. Asn-94 carries an N-linked (GlcNAc...) asparagine glycan. The active site involves Ser-121. Positions Gln-236 to Gln-273 are disordered. Residues Pro-244–Pro-266 form a linker region. A compositionally biased stretch (low complexity) spans Thr-250–Thr-269. In terms of domain architecture, CBM1 spans Pro-266–Leu-302. Intrachain disulfides connect Cys-274–Cys-291 and Cys-285–Cys-301.

Belongs to the cutinase family. Acetylxylan esterase subfamily. In terms of assembly, monomer. In terms of processing, glycosylated.

It localises to the secreted. It catalyses the reaction Deacetylation of xylans and xylo-oligosaccharides.. Its pathway is glycan degradation; xylan degradation. Inhibited by phenylmethylsulfonyl flouride. Degrades acetylated xylans by cleaving acetyl side groups from the hetero-xylan backbone. The polypeptide is Acetylxylan esterase (axe1) (Hypocrea jecorina (Trichoderma reesei)).